The primary structure comprises 259 residues: Ras-related protein Rab-34 (259 aa).

Residue Met1 is modified to N-acetylmethionine. GTP is bound by residues Ser62, Val63, Gly64, Lys65, Thr66, Asp78, Tyr81, and Thr84. Thr66 is a binding site for Mg(2+). The Switch 1 motif lies at 71–89 (RFCKDTFDKNYKATIGVDF). Residues Thr84 and Asp107 each coordinate Mg(2+). The Switch 2 signature appears at 108 to 127 (TAGQERFKCIASTYYRGAQA). The GTP site is built by Gly110, Lys167, Asp169, and Ser198. Phosphoserine is present on Ser241. S-geranylgeranyl cysteine attachment occurs at residues Cys257 and Cys258.

It belongs to the small GTPase superfamily. Rab family. In terms of assembly, interacts with RILP. The GTP-bound form interacts with REP15. It depends on Mg(2+) as a cofactor.

The protein resides in the cytoplasm. Its subcellular location is the golgi apparatus. It is found in the cytoplasmic vesicle. The protein localises to the phagosome. It localises to the phagosome membrane. The protein resides in the cell projection. Its subcellular location is the cilium. It is found in the cytoskeleton. The protein localises to the microtubule organizing center. It localises to the centrosome. The protein resides in the centriole. It catalyses the reaction GTP + H2O = GDP + phosphate + H(+). Its activity is regulated as follows. Regulated by guanine nucleotide exchange factors (GEFs) which promote the exchange of bound GDP for free GTP. Regulated by GTPase activating proteins (GAPs) which increase the GTP hydrolysis activity. Inhibited by GDP dissociation inhibitors (GDIs). The small GTPases Rab are key regulators of intracellular membrane trafficking, from the formation of transport vesicles to their fusion with membranes. Rabs cycle between an inactive GDP-bound form and an active GTP-bound form that is able to recruit to membranes different sets of downstream effectors directly responsible for vesicle formation, movement, tethering and fusion. RAB34 transports protein involved in the redistribution of lysosomes to the peri-Golgi region. Plays a role in the maturation of phagosomes that engulf pathogens, such as S.aureus and M.tuberculosis. Plays a role in the fusion of phagosomes with lysosomes. Required for the early steps of intracellular ciliogenesis, the cilium assembly pathway initiated by trafficking and docking of ciliary vesicles to the centrioles in the cytoplasm, followed by axoneme formation in the cytoplasm. After axoneme elongation, the centrioles migrate close to the cell surface so that ciliary vesicles can fuse with the plasma membrane to expose cilia to the extracellular space. It seems dispensable for ciliogenesis via the extracellular pathway where cilium assembly begins after migration and docking of the centriole to the plasma membrane. Also acts as a positive regulator of hedgehog signaling and regulates ciliary function. This is Ras-related protein Rab-34 from Mus musculus (Mouse).